A 105-amino-acid polypeptide reads, in one-letter code: Precursor of CEP15 (105 aa).

A signal peptide spans 1-29; it reads MDATKIKFDVILLSFLLIISGIPSNLGLS. The propeptide occupies 30–90; that stretch reads TSVRGTTRSE…PSPPVPDYDD (61 aa). Residues 68–80 are compositionally biased toward low complexity; sequence DYYDGGSSSSTTS. The disordered stretch occupies residues 68 to 105; that stretch reads DYYDGGSSSSTTSPSPPVPDYDDIYRRQGDVPSPGIGH. A hydroxyproline mark is found at Pro99 and Pro101.

This sequence belongs to the C-terminally encoded plant signaling peptide (CEP) family. In terms of assembly, interacts with CEP receptors (e.g. CEPR1 and CEPR2). Post-translationally, the mature small signaling peptide is generated by proteolytic processing of the longer precursor.

The protein localises to the secreted. The protein resides in the extracellular space. It is found in the apoplast. Its function is as follows. Extracellular signaling peptide that may regulate primary root growth rate and systemic nitrogen (N)-demand signaling. In Arabidopsis thaliana (Mouse-ear cress), this protein is Precursor of CEP15.